The sequence spans 236 residues: UPF0502 protein Bamb_4889 (236 aa).

The protein belongs to the UPF0502 family.

This is UPF0502 protein Bamb_4889 from Burkholderia ambifaria (strain ATCC BAA-244 / DSM 16087 / CCUG 44356 / LMG 19182 / AMMD) (Burkholderia cepacia (strain AMMD)).